Consider the following 374-residue polypeptide: Fe(2+) transport protein 1 (374 aa).

The N-terminal stretch at 1–33 (MATPRTLVPILPPVAALLLLLVAASSIPILAAA) is a signal peptide. The Extracellular portion of the chain corresponds to 34–62 (QPADACGGAPDQAAADGACHDVPRALRLK). A helical membrane pass occupies residues 63 to 83 (LIAIPTILVSSVVGVCLPLLS). Residues 84 to 92 (RSVPALRPD) lie on the Cytoplasmic side of the membrane. A helical membrane pass occupies residues 93 to 113 (GGLFAVVKAFASGVILATGYM). Residues 114–137 (HVLPDAFNNLTSPCLPRKPWSEFP) lie on the Extracellular side of the membrane. A helical membrane pass occupies residues 138 to 158 (FAAFVAMLAAVSTLMADSLML). Residues 159-219 (TYYNRSKPRP…ATQVQLRRNR (61 aa)) are Cytoplasmic-facing. The interval 166-199 (PRPSSGGDVAAVADHGESPDQGHRHGHGHGHGHG) is disordered. Basic and acidic residues predominate over residues 179 to 188 (DHGESPDQGH). A helical membrane pass occupies residues 220 to 240 (VVVQVLEIGIVVHSVVIGLGM). Residues 241-251 (GASQNVCTIRP) lie on the Extracellular side of the membrane. A helical transmembrane segment spans residues 252-272 (LVAAMCFHQMFEGMGLGGCIL). Residues 273-282 (QAEYGRRMRS) lie on the Cytoplasmic side of the membrane. The chain crosses the membrane as a helical span at residues 283–303 (VLVFFFSTTTPFGIALGLALT). At 304–313 (RVYRDNSPTA) the chain is on the extracellular side. A helical transmembrane segment spans residues 314–334 (LIVVGLLNAASAGLLHYMALV). Over 335–353 (ELLAADFMGPKLQGNVRLQ) the chain is Cytoplasmic. Residues 354–374 (LAAFLAVLLGAGGMSVMAKWA) traverse the membrane as a helical segment.

Belongs to the ZIP transporter (TC 2.A.5) family. In terms of tissue distribution, expressed in companion cells in the upper region of the root.

The protein localises to the cell membrane. In terms of biological role, iron transporter involved in the uptake of iron from the rhizosphere across the plasma membrane in the root epidermal layer. May also transport other divalent cations. In Oryza sativa subsp. japonica (Rice), this protein is Fe(2+) transport protein 1 (IRT1).